Consider the following 597-residue polypeptide: Arginine--tRNA ligase (597 aa).

The short motif at 138 to 148 (ANPTGPMHVGH) is the 'HIGH' region element.

It belongs to the class-I aminoacyl-tRNA synthetase family. As to quaternary structure, monomer.

It localises to the cytoplasm. It carries out the reaction tRNA(Arg) + L-arginine + ATP = L-arginyl-tRNA(Arg) + AMP + diphosphate. This is Arginine--tRNA ligase from Rhodopseudomonas palustris (strain ATCC BAA-98 / CGA009).